Here is a 638-residue protein sequence, read N- to C-terminus: Chaperone protein DnaK (638 aa).

The residue at position 199 (T199) is a Phosphothreonine; by autocatalysis. The interval 600–638 (EINQKKSEENLKKEDTSSESKKDENVVDAEFEEIKDPKK) is disordered. The span at 602–624 (NQKKSEENLKKEDTSSESKKDEN) shows a compositional bias: basic and acidic residues.

Belongs to the heat shock protein 70 family.

In terms of biological role, acts as a chaperone. The sequence is that of Chaperone protein DnaK from Buchnera aphidicola subsp. Schizaphis graminum (strain Sg).